Reading from the N-terminus, the 719-residue chain is Mini-chromosome maintenance complex-binding protein (719 aa).

The segment covering N152–N174 has biased composition (low complexity). Disordered regions lie at residues N152–I179, A194–K236, and T375–N416. Residues A194–K211 show a composition bias toward basic and acidic residues. 2 stretches are compositionally biased toward low complexity: residues S212–S221 and N377–N416.

This sequence belongs to the MCMBP family. Interacts with the MCM complex.

It is found in the nucleus. In terms of biological role, associated component of the MCM complex that acts as a regulator of DNA replication. Binds to the MCM complex during late S phase and may act by promoting the disassembly of the MCM complex from chromatin. The chain is Mini-chromosome maintenance complex-binding protein (mcmbp) from Dictyostelium discoideum (Social amoeba).